Here is a 316-residue protein sequence, read N- to C-terminus: L-lactate dehydrogenase (316 aa).

NAD(+) contacts are provided by residues 13–15 (GMI), 34–36 (FDI), Y67, and 79–83 (TAGFT). R95 provides a ligand contact to substrate. Residues 125-127 (VTN), L150, and L154 each bind NAD(+). Substrate contacts are provided by R158 and H182. An NAD(+)-binding site is contributed by H182. H182 functions as the Proton acceptor in the catalytic mechanism.

The protein belongs to the LDH/MDH superfamily. LDH family. As to quaternary structure, homotetramer.

The catalysed reaction is (S)-lactate + NAD(+) = pyruvate + NADH + H(+). It functions in the pathway fermentation; pyruvate fermentation to lactate; (S)-lactate from pyruvate: step 1/1. In Plasmodium berghei, this protein is L-lactate dehydrogenase.